A 273-amino-acid polypeptide reads, in one-letter code: Formamidopyrimidine-DNA glycosylase (273 aa).

Residue Pro-2 is the Schiff-base intermediate with DNA of the active site. Glu-3 functions as the Proton donor in the catalytic mechanism. The active-site Proton donor; for beta-elimination activity is Lys-58. 2 residues coordinate DNA: His-91 and Arg-110. Residues 238-272 (QVYGKTGQPCPRCGCLIKKIKVGGRGTHYCPRCQC) form an FPG-type zinc finger. Arg-262 acts as the Proton donor; for delta-elimination activity in catalysis.

Belongs to the FPG family. Monomer. It depends on Zn(2+) as a cofactor.

The enzyme catalyses Hydrolysis of DNA containing ring-opened 7-methylguanine residues, releasing 2,6-diamino-4-hydroxy-5-(N-methyl)formamidopyrimidine.. It carries out the reaction 2'-deoxyribonucleotide-(2'-deoxyribose 5'-phosphate)-2'-deoxyribonucleotide-DNA = a 3'-end 2'-deoxyribonucleotide-(2,3-dehydro-2,3-deoxyribose 5'-phosphate)-DNA + a 5'-end 5'-phospho-2'-deoxyribonucleoside-DNA + H(+). Its function is as follows. Involved in base excision repair of DNA damaged by oxidation or by mutagenic agents. Acts as a DNA glycosylase that recognizes and removes damaged bases. Has a preference for oxidized purines, such as 7,8-dihydro-8-oxoguanine (8-oxoG). Has AP (apurinic/apyrimidinic) lyase activity and introduces nicks in the DNA strand. Cleaves the DNA backbone by beta-delta elimination to generate a single-strand break at the site of the removed base with both 3'- and 5'-phosphates. The sequence is that of Formamidopyrimidine-DNA glycosylase from Streptococcus agalactiae serotype Ia (strain ATCC 27591 / A909 / CDC SS700).